A 188-amino-acid polypeptide reads, in one-letter code: UPF0397 protein LCK_00164 (188 aa).

5 helical membrane-spanning segments follow: residues valine 15–proline 35, glycine 48–isoleucine 68, glycine 79–glycine 99, tryptophan 121–isoleucine 141, and alanine 154–alanine 174.

Belongs to the UPF0397 family.

The protein localises to the cell membrane. This is UPF0397 protein LCK_00164 from Leuconostoc citreum (strain KM20).